Consider the following 260-residue polypeptide: Snake venom serine protease pallabin-2 (260 aa).

A signal peptide spans 1-18; it reads MVLIKVLANLLILQLSYA. A propeptide spanning residues 19-24 is cleaved from the precursor; that stretch reads QKSSEL. Positions 25 to 251 constitute a Peptidase S1 domain; the sequence is IIGGDECNIN…HLDWIENIIA (227 aa). Cystine bridges form between Cys-31–Cys-163, Cys-50–Cys-66, Cys-98–Cys-258, Cys-142–Cys-212, Cys-174–Cys-191, and Cys-202–Cys-227. The active-site Charge relay system is the His-65. Residue Asn-103 is glycosylated (N-linked (GlcNAc...) asparagine). The active-site Charge relay system is the Asp-110. The active-site Charge relay system is Ser-206.

The protein belongs to the peptidase S1 family. Snake venom subfamily. In terms of assembly, monomer. As to expression, expressed by the venom gland.

The protein resides in the secreted. Snake venom serine protease that may act in the hemostasis system of the prey. In Gloydius halys (Chinese water mocassin), this protein is Snake venom serine protease pallabin-2 (JZTHR7).